Reading from the N-terminus, the 447-residue chain is MTVKDILDAIQSKDATSADFAALQLPESYRAITVHKDETEMFAGLETRDKDPRKSIHLDEVPVPELGPGEALVAVMASSVNYNSVWTSIFEPVSTFAFLERYGKLSPLTKRHDLPYHIIGSDLAGVVLRTGPGVNAWQPGDEVVAHCLSVELESPDGHDDTMLDPEQRIWGFETNFGGLAEIALVKTNQLMPKPKHLTWEEAAAPGLVNSTAYRQLVSRNGAAMKQGDNVLIWGASGGLGSYATQFALAGGANPICVVSSPQKAEICRSMGAEAIIDRNAEGYKFWKDEHTQDPKEWKRFGKRIRELTGGEDIDIVFEHPGRETFGASVYVTRKGGTITTCASTSGYMHEYDNRYLWMSLKRIIGSHFANYREAYEANRLIAKGKIHPTLSKTYSLEETGQAAYDVHRNLHQGKVGVLCLAPEEGLGVRDAEMRAQHIDAINRFRNV.

It belongs to the zinc-containing alcohol dehydrogenase family. Crotonyl-CoA carboxylase/reductase subfamily. Homodimer.

The catalysed reaction is butanoyl-CoA + NADP(+) = (2E)-butenoyl-CoA + NADPH + H(+). Its activity is regulated as follows. Inhibited by divalent cations (30-100%), beta-chloromercuribenzoate (85%), iodoacetamide (40%) and N-ethylmaleamide (80%). The presence of CoA thioesters containing 12-20 carbon atoms results in inhibition of enzyme activity. The greatest degree of inhibition is observed in the presence of palmitoyl-CoA and myristoyl-CoA. The branched-chain fatty acids, isopalmitoyl-CoA and isomyristoyl-CoA are less effective inhibitors of the crotonyl-CoA reductase. Concentrations of NADPH above 200 uM lead to inhibition of enzyme activity. In terms of biological role, may play a role in supplying butyryl-CoA for straight-chain fatty acid biosynthesis. Catalyzes the conversion of crotonyl-CoA to butyryl-CoA. It shows a high substrate specificity for crotonyl-CoA, a short-chain-length (C4), but no measurable activity is observed with shorter (C3) or longer-chain-length enoyl-CoA thioesters. The sequence is that of Crotonyl-CoA reductase (ccr) from Streptomyces collinus.